Reading from the N-terminus, the 323-residue chain is MVSEEYKKAGVDLEKLRNYHNMISQIISSTYKNTIIGAGHYSGVIKIGSLNIAMHTDGVGTKTFLALQTRIIKPVGIDCVAMNVNDLICVGAKPVALVDYIALERPMDNVVNEIIDGIVQGAKEADVEVIGGETAIMPDVIRGFDLSCTAIGVVDKLKTGAEIRPGDYVLGLESSGIHANGYSLVRKLIEEGKLSLDEYKNELLKPTKIYVKPILEVMNMIKGAAHVTGGAFSKLKRLTSYKIVLNMPDPPQIFKTIEKAGVAHEEMYKVFNMGIGIVLFVSEELMKEVKTKLEGYGTVYELGRVYNGNGITIKTYKNEILRL.

The protein belongs to the AIR synthase family.

It localises to the cytoplasm. The catalysed reaction is 2-formamido-N(1)-(5-O-phospho-beta-D-ribosyl)acetamidine + ATP = 5-amino-1-(5-phospho-beta-D-ribosyl)imidazole + ADP + phosphate + H(+). Its pathway is purine metabolism; IMP biosynthesis via de novo pathway; 5-amino-1-(5-phospho-D-ribosyl)imidazole from N(2)-formyl-N(1)-(5-phospho-D-ribosyl)glycinamide: step 2/2. In Saccharolobus solfataricus (strain ATCC 35092 / DSM 1617 / JCM 11322 / P2) (Sulfolobus solfataricus), this protein is Phosphoribosylformylglycinamidine cyclo-ligase.